Here is a 360-residue protein sequence, read N- to C-terminus: Membrane-bound lytic murein transglycosylase C (360 aa).

Positions 1-16 (MKKLLALAVIAPLLIS) are cleaved as a signal peptide. Cys-17 carries the N-palmitoyl cysteine lipid modification. Cys-17 is lipidated: S-diacylglycerol cysteine.

The protein belongs to the transglycosylase Slt family.

It localises to the cell outer membrane. It carries out the reaction Exolytic cleavage of the (1-&gt;4)-beta-glycosidic linkage between N-acetylmuramic acid (MurNAc) and N-acetylglucosamine (GlcNAc) residues in peptidoglycan, from either the reducing or the non-reducing ends of the peptidoglycan chains, with concomitant formation of a 1,6-anhydrobond in the MurNAc residue.. In terms of biological role, murein-degrading enzyme. May play a role in recycling of muropeptides during cell elongation and/or cell division. The protein is Membrane-bound lytic murein transglycosylase C of Salmonella paratyphi A (strain ATCC 9150 / SARB42).